A 176-amino-acid polypeptide reads, in one-letter code: Ribosome rescue factor SmrB (176 aa).

The Smr domain maps to 93 to 168 (LDLHGYRQSE…GDAALLVLID (76 aa)).

The protein belongs to the SmrB family. In terms of assembly, associates with collided ribosomes, but not with correctly translating polysomes.

Functionally, acts as a ribosome collision sensor. Detects stalled/collided disomes (pairs of ribosomes where the leading ribosome is stalled and a second ribosome has collided with it) and endonucleolytically cleaves mRNA at the 5' boundary of the stalled ribosome. Stalled/collided disomes form a new interface (primarily via the 30S subunits) that binds SmrB. Cleaved mRNA becomes available for tmRNA ligation, leading to ribosomal subunit dissociation and rescue of stalled ribosomes. In Shewanella baltica (strain OS195), this protein is Ribosome rescue factor SmrB.